We begin with the raw amino-acid sequence, 302 residues long: uncharacterized protein (302 aa).

A signal peptide spans 1–52 (MLKKLKVVRLLVNHLIYCPSIFMPYSKNMKKKIWNKTSLGALFMLFGTALTA).

It belongs to the MG439/MG440 family.

This is an uncharacterized protein from Mycoplasma pneumoniae (strain ATCC 29342 / M129 / Subtype 1) (Mycoplasmoides pneumoniae).